The chain runs to 1382 residues: DNA-directed RNA polymerase subunit beta (1382 aa).

Belongs to the RNA polymerase beta chain family. As to quaternary structure, the RNAP catalytic core consists of 2 alpha, 1 beta, 1 beta' and 1 omega subunit. When a sigma factor is associated with the core the holoenzyme is formed, which can initiate transcription.

The enzyme catalyses RNA(n) + a ribonucleoside 5'-triphosphate = RNA(n+1) + diphosphate. Functionally, DNA-dependent RNA polymerase catalyzes the transcription of DNA into RNA using the four ribonucleoside triphosphates as substrates. In Anaplasma marginale (strain Florida), this protein is DNA-directed RNA polymerase subunit beta.